The chain runs to 257 residues: Phycoerythrobilin:ferredoxin oxidoreductase (257 aa).

This sequence belongs to the HY2 family.

It catalyses the reaction (3Z)-phycoerythrobilin + oxidized 2[4Fe-4S]-[ferredoxin] = 15,16-dihydrobiliverdin + reduced 2[4Fe-4S]-[ferredoxin] + 2 H(+). Functionally, catalyzes the two-electron reduction of the C2 and C3(1) diene system of 15,16-dihydrobiliverdin. The sequence is that of Phycoerythrobilin:ferredoxin oxidoreductase (pebB) from Prochlorococcus marinus (strain SARG / CCMP1375 / SS120).